The following is a 660-amino-acid chain: Probable rhamnogalacturonate lyase B (660 aa).

Positions 1 to 20 (MRLSVSLGLASLWTAIGATA) are cleaved as a signal peptide. 11 N-linked (GlcNAc...) asparagine glycosylation sites follow: Asn22, Asn27, Asn109, Asn142, Asn238, Asn284, Asn432, Asn492, Asn532, Asn594, and Asn635.

The protein belongs to the polysaccharide lyase 4 family.

It localises to the secreted. It carries out the reaction Endotype eliminative cleavage of L-alpha-rhamnopyranosyl-(1-&gt;4)-alpha-D-galactopyranosyluronic acid bonds of rhamnogalacturonan I domains in ramified hairy regions of pectin leaving L-rhamnopyranose at the reducing end and 4-deoxy-4,5-unsaturated D-galactopyranosyluronic acid at the non-reducing end.. In terms of biological role, pectinolytic enzymes consist of four classes of enzymes: pectin lyase, polygalacturonase, pectin methylesterase and rhamnogalacturonase. Degrades the rhamnogalacturonan I (RG-I) backbone of pectin. This Aspergillus terreus (strain NIH 2624 / FGSC A1156) protein is Probable rhamnogalacturonate lyase B (rglB).